Consider the following 513-residue polypeptide: Xyloglucan 6-xylosyltransferase 4 (513 aa).

Residues methionine 1–threonine 39 are Cytoplasmic-facing. A helical; Signal-anchor for type II membrane protein membrane pass occupies residues leucine 40–glycine 60. Over threonine 61–proline 513 the chain is Lumenal. 5 N-linked (GlcNAc...) asparagine glycosylation sites follow: asparagine 76, asparagine 110, asparagine 142, asparagine 174, and asparagine 490.

This sequence belongs to the glycosyltransferase 34 family.

It localises to the golgi apparatus membrane. It catalyses the reaction Transfers an alpha-D-xylosyl residue from UDP-D-xylose to a glucose residue in xyloglucan, forming an alpha-(1-&gt;6)-D-xylosyl-D-glucose linkage.. Its function is as follows. Xylosyltransferase specific to UDP-D-xylose that accepts cellohexaose as substrate to produce xyloglucan. The protein is Xyloglucan 6-xylosyltransferase 4 of Arabidopsis thaliana (Mouse-ear cress).